We begin with the raw amino-acid sequence, 256 residues long: Glycerol-3-phosphate acyltransferase (256 aa).

A run of 6 helical transmembrane segments spans residues 2–22 (FPYLGIIIASIFGYLLGSVLW), 58–78 (LAVALLDGFKVLITAAFAIGL), 90–110 (SYFIPCIFVLIGHCWPIWFKF), 123–143 (LIVVNYLYFLIFFIVWWIFAF), 153–173 (IIGTATILLLMWLPWTYGVMG), and 211–231 (FADGMLTGQIVILIGMVILVV).

Belongs to the PlsY family. Probably interacts with PlsX.

It localises to the cell membrane. It carries out the reaction an acyl phosphate + sn-glycerol 3-phosphate = a 1-acyl-sn-glycero-3-phosphate + phosphate. It participates in lipid metabolism; phospholipid metabolism. Its function is as follows. Catalyzes the transfer of an acyl group from acyl-phosphate (acyl-PO(4)) to glycerol-3-phosphate (G3P) to form lysophosphatidic acid (LPA). This enzyme utilizes acyl-phosphate as fatty acyl donor, but not acyl-CoA or acyl-ACP. This Mesoplasma florum (strain ATCC 33453 / NBRC 100688 / NCTC 11704 / L1) (Acholeplasma florum) protein is Glycerol-3-phosphate acyltransferase.